The following is a 214-amino-acid chain: Protein DEHYDRATION-INDUCED 19 homolog 5 (214 aa).

Serine 110 carries the phosphoserine modification. The interval 148–185 (PKKSKLVQPDSSSEASMEDNSLIRDSTEKDWESPSPLS) is disordered. Over residues 156 to 166 (PDSSSEASMED) the composition is skewed to polar residues. Residues 168–179 (SLIRDSTEKDWE) show a composition bias toward basic and acidic residues.

Belongs to the Di19 family. In terms of processing, phosphorylated in vitro by CPK3 or CPK11. As to expression, expressed in seedlings, roots, leaves, stems, flowers and siliques.

The protein localises to the nucleus. This chain is Protein DEHYDRATION-INDUCED 19 homolog 5 (DI19-5), found in Arabidopsis thaliana (Mouse-ear cress).